The following is a 1328-amino-acid chain: Protein turtle homolog B (1328 aa).

The first 17 residues, 1 to 17, serve as a signal peptide directing secretion; it reads MIWYVATLIASVISTRG. Residues 18 to 722 lie on the Extracellular side of the membrane; that stretch reads LVAQGAHGLR…DLTDDGLARP (705 aa). 5 consecutive Ig-like domains span residues 30–115, 139–226, 228–320, 324–415, and 420–504; these read PEFV…ECKV, PTFT…LLVQ, PPFI…AYLT, PARV…ARLV, and PYFT…THLT. Cystine bridges form between C45–C113 and C161–C208. N-linked (GlcNAc...) asparagine glycans are attached at residues N241 and N258. 3 disulfide bridges follow: C250–C303, C346–C397, and C442–C488. Fibronectin type-III domains are found at residues 512–604 and 614–708; these read APGS…TLAF and LVTP…STDI. N624 carries an N-linked (GlcNAc...) asparagine glycan. A helical membrane pass occupies residues 723 to 743; that stretch reads VLAGIVATICFLAAAILFSTL. The Cytoplasmic portion of the chain corresponds to 744-1328; it reads AACFVNKQRK…EPPTTLPTSG (585 aa). Disordered stretches follow at residues 758-817, 914-1040, and 1106-1328; these read RKKD…EKEL, PMSS…PEPW, and KSPG…PTSG. S775, S783, and S794 each carry phosphoserine. A compositionally biased stretch (low complexity) spans 990–1001; that stretch reads SPLSSVMSSPPL. Composition is skewed to polar residues over residues 1018-1033, 1129-1141, and 1199-1214; these read ENASNSTLPLTQTPTG, LVSQGQLRHTSQG, and SRLSPLTQSPLSSRTG. R1136 carries the post-translational modification Omega-N-methylarginine. S1207 and S1215 each carry phosphoserine. Low complexity predominate over residues 1246–1273; sequence SFSRKSTPSSTGSPSQSSRSGSPSYRPT. Pro residues-rich tracts occupy residues 1284-1295 and 1318-1328; these read PSPPPGPAPPAP and PEPPTTLPTSG.

It belongs to the immunoglobulin superfamily. Turtle family. Found in a complex with MAGI2 and NLGN2, where it interacts with MAGI2 (via PDZ 5 and PDZ 6 domains). N-glycosylated and sialylated. Not significantly O-glycosylated. In terms of tissue distribution, detected in brain.

Its subcellular location is the cell membrane. The protein localises to the postsynaptic cell membrane. It is found in the postsynaptic density. Functionally, transmembrane protein which is abundantly expressed in interneurons, where it may regulate inhibitory synapse development. May mediate homophilic cell adhesion. The protein is Protein turtle homolog B of Mus musculus (Mouse).